The following is a 230-amino-acid chain: Acetyltransferase (230 aa).

An N-acetyltransferase domain is found at 143 to 230; that stretch reads RYLDGKVICD…RVAVYKARQT (88 aa).

Its pathway is mycotoxin biosynthesis. In terms of biological role, acetyltransferase; part of the satratoxin SC3 cluster involved in the biosynthesis of satratoxins, trichothecene mycotoxins that are associated with human food poisonings. Satratoxins are suggested to be made by products of multiple gene clusters (SC1, SC2 and SC3) that encode 21 proteins in all, including polyketide synthases, acetyltransferases, and other enzymes expected to modify the trichothecene skeleton. SC1 encodes 10 proteins, SAT1 to SAT10. The largest are SAT8, which encodes a putative polyketide synthase (PKS) with a conventional non-reducing architecture, and SAT10, a putative protein containing four ankyrin repeats and thus may be involved in protein scaffolding. The putative short-chain reductase SAT3 may assist the PKS in some capacity. SAT6 contains a secretory lipase domain and acts probably as a trichothecene esterase. SAT5 encodes a putative acetyltransferase, and so, with SAT6, may affect endogenous protection from toxicity. The probable transcription factor SAT9 may regulate the expression of the SC1 cluster. SC2 encodes proteins SAT11 to SAT16, the largest of which encodes the putative reducing PKS SAT13. SAT11 is a cytochrome P450 monooxygenase, while SAT14 and SAT16 are probable acetyltransferases. The SC2 cluster may be regulated by the transcription factor SAT15. SC3 is a small cluster that encodes 5 proteins, SAT17 to SAT21. SAT21 is a putative MFS-type transporter which may have a role in exporting secondary metabolites. The four other proteins putatively encoded in SC3 include the taurine hydroxylase-like protein SAT17, the O-methyltransferase SAT18, the acetyltransferase SAT19, and the Cys6-type zinc finger SAT20, the latter being probably involved in regulation of SC3 expression. The chain is Acetyltransferase from Stachybotrys chartarum (strain CBS 109288 / IBT 7711) (Toxic black mold).